We begin with the raw amino-acid sequence, 240 residues long: Ribosomal RNA small subunit methyltransferase G (240 aa).

S-adenosyl-L-methionine-binding positions include glycine 78, phenylalanine 83, 129-130 (AE), and arginine 147. The tract at residues 218-240 (RRQTSKKYPRKPGTPNKSPLLEN) is disordered.

This sequence belongs to the methyltransferase superfamily. RNA methyltransferase RsmG family.

The protein localises to the cytoplasm. Specifically methylates the N7 position of guanine in position 535 of 16S rRNA. The protein is Ribosomal RNA small subunit methyltransferase G of Staphylococcus haemolyticus (strain JCSC1435).